The sequence spans 876 residues: E3 ubiquitin-protein ligase TRIM71 (876 aa).

Residues 12–90 (CPLCKEMCGS…ALKLRCPICD (79 aa)) form an RING-type zinc finger. A compositionally biased stretch (low complexity) spans 26-40 (SSNSSTSSSSSQTSG). 2 disordered regions span residues 26–46 (SSNS…GGGG) and 128–192 (KNGR…AALL). The span at 137–148 (PAAGSGAGGGGA) shows a compositional bias: gly residues. Residues 160-182 (RAAAAASSPAAGSAAPSASSSSS) are compositionally biased toward low complexity. The segment at 200-247 (QGEPRCSSCDEGNAASSRCLDCQEHLCDNCVRAHQRVRLTKDHFIERF) adopts a B box-type 1; atypical zinc-finger fold. 8 residues coordinate Zn(2+): cysteine 205, cysteine 208, cysteine 229, histidine 233, cysteine 286, histidine 289, cysteine 309, and histidine 314. Residues 281 to 322 (ERASYCQHHDDEVLHFYCDTCSVPICRECTMGRHVGHSFIYL) form a B box-type 2 zinc finger. Coiled coils occupy residues 344–373 (RQAI…SEVK) and 399–434 (QVKA…EEGR). Residues 487 to 588 (SSGAFAPLTK…IENSPFKVVV (102 aa)) form a Filamin repeat. 6 NHL repeats span residues 601-644 (GLSF…FKPC), 648-691 (HHKF…FTFE), 695-738 (ILKF…FGPD), 742-785 (LNKY…IHAD), 789-832 (ARFL…FESN), and 836-876 (LCKF…ILVF).

This sequence belongs to the TRIM/RBCC family.

Its subcellular location is the cytoplasm. The protein localises to the P-body. The catalysed reaction is S-ubiquitinyl-[E2 ubiquitin-conjugating enzyme]-L-cysteine + [acceptor protein]-L-lysine = [E2 ubiquitin-conjugating enzyme]-L-cysteine + N(6)-ubiquitinyl-[acceptor protein]-L-lysine.. The protein operates within protein modification; protein ubiquitination. Functionally, E3 ubiquitin-protein ligase that cooperates with the microRNAs (miRNAs) machinery and promotes embryonic stem cells proliferation and maintenance. Binds to miRNAs and participates in post-transcriptional repression of transcripts. Required to maintain proliferation and prevent premature differentiation of neural progenitor cells during early neural development. The protein is E3 ubiquitin-protein ligase TRIM71 (TRIM71) of Gallus gallus (Chicken).